A 485-amino-acid chain; its full sequence is Bcl-2-like protein 13 (485 aa).

A BH4 motif is present at residues 14–30; it reads ETKYVVLSYLGLLSQEK. Phosphoserine is present on serine 38. The short motif at 100 to 116 is the BH3 element; it reads MEDCLAHLGEKVSQELK. Positions 147–157 match the BH1 motif; that stretch reads ASGWNKILVPL. A BH2 motif is present at residues 193-206; it reads YIIQQGGWGTVFSL. The interval 218-248 is disordered; the sequence is AEDSNDIYILPSDNSGQVSPPESPTVTTSWQ. Over residues 229–248 the composition is skewed to polar residues; the sequence is SDNSGQVSPPESPTVTTSWQ. The A repeat unit spans residues 246–256; the sequence is SWQSESLPVSL. A phosphoserine mark is found at serine 259, serine 261, serine 303, serine 326, serine 371, serine 375, serine 410, serine 420, serine 426, serine 429, and serine 444. One copy of the A; approximate repeat lies at 261 to 271; it reads SWHTESLPVSL. The disordered stretch occupies residues 418–451; that stretch reads EESLVEELSPASEKKPVPPSEGKSRLSPAGEMKP. One copy of the B repeat lies at 425–441; sequence LSPASEKKPVPPSEGKS. Residues 443-459 form a B; approximate repeat; it reads LSPAGEMKPMPLSEGKS. Residues 460 to 480 form a helical membrane-spanning segment; the sequence is ILLFGGAAAVAILAVAIGVAL.

This sequence belongs to the Bcl-2 family. In terms of assembly, monomer. In terms of tissue distribution, ubiquitous, with the highest levels of expression in heart, placenta and pancreas.

The protein resides in the mitochondrion membrane. Its subcellular location is the nucleus. Functionally, may promote the activation of caspase-3 and apoptosis. The chain is Bcl-2-like protein 13 (BCL2L13) from Homo sapiens (Human).